Here is a 503-residue protein sequence, read N- to C-terminus: Anthranilate synthase component 1 3 (503 aa).

269–271 (PYS) is an L-tryptophan binding site. 304 to 305 (GT) is a binding site for chorismate. Glu-331 is a Mg(2+) binding site. Chorismate-binding positions include Tyr-419, Arg-439, 453–455 (GSG), and Gly-455. A Mg(2+)-binding site is contributed by Glu-468.

Belongs to the anthranilate synthase component I family. Tetramer of two components I and two components II. Mg(2+) serves as cofactor.

It carries out the reaction chorismate + L-glutamine = anthranilate + pyruvate + L-glutamate + H(+). It participates in amino-acid biosynthesis; L-tryptophan biosynthesis; L-tryptophan from chorismate: step 1/5. This chain is Anthranilate synthase component 1 3 (trpE3), found in Haloarcula marismortui (strain ATCC 43049 / DSM 3752 / JCM 8966 / VKM B-1809) (Halobacterium marismortui).